Consider the following 347-residue polypeptide: MDKKKALDAALSQIERSFGKGSIMRLGQKEGVVEIETISTGSLSLDIALGVGGLPKGRIIEIYGPESSGKTTLALHAIAEAQKNGGVCAFVDAEHALDPIYARKLGVDLENLFVSQPDTGEQALEITETLVRSGAVDVLVVDSVAALTPRAEIDGEMSDSLPGLQARLMSKALRKLTASIFRSNCMVIFINQIRMKIGVMFGSPETTTGGNALKFYASVRLDIRRIGSIKDKELVVGNQTRVKVVKNKLAPPFKQVEFDIIYGEGISKLGELIDLGVKVGIVEKSGAWFSYNSQRLGQGRENAKQFLREHAEIAAEIETALRQNAGLLAIELLENVGADNIENDEEI.

64–71 is an ATP binding site; sequence GPESSGKT.

This sequence belongs to the RecA family.

It localises to the cytoplasm. In terms of biological role, can catalyze the hydrolysis of ATP in the presence of single-stranded DNA, the ATP-dependent uptake of single-stranded DNA by duplex DNA, and the ATP-dependent hybridization of homologous single-stranded DNAs. It interacts with LexA causing its activation and leading to its autocatalytic cleavage. In Bartonella bacilliformis (strain ATCC 35685 / KC583 / Herrer 020/F12,63), this protein is Protein RecA.